A 377-amino-acid polypeptide reads, in one-letter code: PqqA peptide cyclase (377 aa).

Residues 12–228 (FGIPLAVLLE…EAARERLKGQ (217 aa)) form the Radical SAM core domain. 3 residues coordinate [4Fe-4S] cluster: cysteine 26, cysteine 30, and cysteine 33.

This sequence belongs to the radical SAM superfamily. PqqE family. In terms of assembly, interacts with PqqD. The interaction is necessary for activity of PqqE. It depends on [4Fe-4S] cluster as a cofactor.

It catalyses the reaction [PQQ precursor protein] + S-adenosyl-L-methionine = E-Y cross-linked-[PQQ precursor protein] + 5'-deoxyadenosine + L-methionine + H(+). It participates in cofactor biosynthesis; pyrroloquinoline quinone biosynthesis. Catalyzes the cross-linking of a glutamate residue and a tyrosine residue in the PqqA protein as part of the biosynthesis of pyrroloquinoline quinone (PQQ). The chain is PqqA peptide cyclase from Rhodopseudomonas palustris (strain ATCC BAA-98 / CGA009).